Consider the following 387-residue polypeptide: Protein RecA (387 aa).

78-85 is a binding site for ATP; the sequence is GPESSGKT. The span at 355 to 369 shows a compositional bias: basic and acidic residues; that stretch reads KSIERDTKETKETKS. The disordered stretch occupies residues 355–387; the sequence is KSIERDTKETKETKSKQPVSFSTEADGDIAVGE.

Belongs to the RecA family.

The protein resides in the cytoplasm. Functionally, can catalyze the hydrolysis of ATP in the presence of single-stranded DNA, the ATP-dependent uptake of single-stranded DNA by duplex DNA, and the ATP-dependent hybridization of homologous single-stranded DNAs. It interacts with LexA causing its activation and leading to its autocatalytic cleavage. The protein is Protein RecA of Leptospira biflexa serovar Patoc (strain Patoc 1 / ATCC 23582 / Paris).